Here is a 563-residue protein sequence, read N- to C-terminus: Arginine--tRNA ligase (563 aa).

The 'HIGH' region signature appears at 121–131 (PNIAKPFSIGH).

This sequence belongs to the class-I aminoacyl-tRNA synthetase family. In terms of assembly, monomer.

It is found in the cytoplasm. It carries out the reaction tRNA(Arg) + L-arginine + ATP = L-arginyl-tRNA(Arg) + AMP + diphosphate. This chain is Arginine--tRNA ligase, found in Streptococcus thermophilus (strain ATCC BAA-250 / LMG 18311).